Reading from the N-terminus, the 177-residue chain is 3-hydroxyanthranilate 3,4-dioxygenase (177 aa).

Arg47 lines the O2 pocket. Positions 51, 57, and 95 each coordinate Fe cation. Position 57 (Glu57) interacts with substrate. The substrate site is built by Arg99 and Glu110. Positions 125, 128, 162, and 165 each coordinate Fe cation.

This sequence belongs to the 3-HAO family. As to quaternary structure, homodimer. Requires Fe(2+) as cofactor.

It carries out the reaction 3-hydroxyanthranilate + O2 = (2Z,4Z)-2-amino-3-carboxymuconate 6-semialdehyde. It participates in cofactor biosynthesis; NAD(+) biosynthesis; quinolinate from L-kynurenine: step 3/3. In terms of biological role, catalyzes the oxidative ring opening of 3-hydroxyanthranilate to 2-amino-3-carboxymuconate semialdehyde, which spontaneously cyclizes to quinolinate. The chain is 3-hydroxyanthranilate 3,4-dioxygenase from Burkholderia cenocepacia (strain ATCC BAA-245 / DSM 16553 / LMG 16656 / NCTC 13227 / J2315 / CF5610) (Burkholderia cepacia (strain J2315)).